The primary structure comprises 207 residues: Small ribosomal subunit protein uS4 (207 aa).

A disordered region spans residues 31–55; it reads KCKLDSKPGQHGRTSGARTSDYGTQ. Residues 42-53 show a composition bias toward polar residues; sequence GRTSGARTSDYG. The S4 RNA-binding domain occupies 97-160; that stretch reads SRLDNVVYRM…KKQARIIEAL (64 aa).

This sequence belongs to the universal ribosomal protein uS4 family. Part of the 30S ribosomal subunit. Contacts protein S5. The interaction surface between S4 and S5 is involved in control of translational fidelity.

Functionally, one of the primary rRNA binding proteins, it binds directly to 16S rRNA where it nucleates assembly of the body of the 30S subunit. With S5 and S12 plays an important role in translational accuracy. The polypeptide is Small ribosomal subunit protein uS4 (Burkholderia multivorans (strain ATCC 17616 / 249)).